The sequence spans 116 residues: Ribosome-binding factor A (116 aa).

Belongs to the RbfA family. As to quaternary structure, monomer. Binds 30S ribosomal subunits, but not 50S ribosomal subunits or 70S ribosomes.

The protein localises to the cytoplasm. One of several proteins that assist in the late maturation steps of the functional core of the 30S ribosomal subunit. Associates with free 30S ribosomal subunits (but not with 30S subunits that are part of 70S ribosomes or polysomes). Required for efficient processing of 16S rRNA. May interact with the 5'-terminal helix region of 16S rRNA. This Streptococcus pneumoniae (strain ATCC BAA-255 / R6) protein is Ribosome-binding factor A.